A 290-amino-acid polypeptide reads, in one-letter code: Cilia- and flagella-associated protein 298 (290 aa).

The protein belongs to the CFAP298 family. As to quaternary structure, interacts with ZMYND10. Expressed in the trachea (at protein level).

Its subcellular location is the cytoplasm. It localises to the cytoskeleton. It is found in the cilium basal body. Functionally, plays a role in motile cilium function, possibly by acting on outer dynein arm assembly. Seems to be important for initiation rather than maintenance of cilium motility. Required for correct positioning of cilia at the apical cell surface, suggesting an additional role in the planar cell polarity (PCP) pathway. May suppress canonical Wnt signaling activity. This Rattus norvegicus (Rat) protein is Cilia- and flagella-associated protein 298.